We begin with the raw amino-acid sequence, 529 residues long: Bifunctional purine biosynthesis protein PurH (529 aa).

The MGS-like domain maps to 1–148; that stretch reads MNNARPIRRA…KNHKDTTIIV (148 aa).

It belongs to the PurH family.

It catalyses the reaction (6R)-10-formyltetrahydrofolate + 5-amino-1-(5-phospho-beta-D-ribosyl)imidazole-4-carboxamide = 5-formamido-1-(5-phospho-D-ribosyl)imidazole-4-carboxamide + (6S)-5,6,7,8-tetrahydrofolate. It carries out the reaction IMP + H2O = 5-formamido-1-(5-phospho-D-ribosyl)imidazole-4-carboxamide. Its pathway is purine metabolism; IMP biosynthesis via de novo pathway; 5-formamido-1-(5-phospho-D-ribosyl)imidazole-4-carboxamide from 5-amino-1-(5-phospho-D-ribosyl)imidazole-4-carboxamide (10-formyl THF route): step 1/1. The protein operates within purine metabolism; IMP biosynthesis via de novo pathway; IMP from 5-formamido-1-(5-phospho-D-ribosyl)imidazole-4-carboxamide: step 1/1. The sequence is that of Bifunctional purine biosynthesis protein PurH from Shewanella pealeana (strain ATCC 700345 / ANG-SQ1).